The sequence spans 317 residues: MPVLGSQRRLLGSLNCTPPATFPLTLAPNRTGPQCLEVAIPDGLFLSLGLVSLVENVLVVAAIAKNRNLQSPMYYFICCLAMSDLLVSVSNVLETAVMLLLEAGALAARAAVVQQLDNVIDVLICGSMVSSLCFLGAIAVDRYISIFYALRYHSVVTLPRAWRIIAAIWVASILTSLLFITYYNHTVVLLCLVGFFIAMLALMAVLYVHMLARACQHARGIARLQKRQRPIHQGFGLKGAATLTILLGVFFLCWGPFFLHLSLIVLCPQHPTCGCIFKNFNLFLALIICNAIVDPLIYAFRSQELRKTLQEVLQCSW.

Over 1-37 (MPVLGSQRRLLGSLNCTPPATFPLTLAPNRTGPQCLE) the chain is Extracellular. N29 is a glycosylation site (N-linked (GlcNAc...) asparagine). Residues 38–63 (VAIPDGLFLSLGLVSLVENVLVVAAI) traverse the membrane as a helical segment. At 64–72 (AKNRNLQSP) the chain is on the cytoplasmic side. A helical membrane pass occupies residues 73–93 (MYYFICCLAMSDLLVSVSNVL). At 94 to 118 (ETAVMLLLEAGALAARAAVVQQLDN) the chain is on the extracellular side. Residues 119–140 (VIDVLICGSMVSSLCFLGAIAV) form a helical membrane-spanning segment. Residues 141-163 (DRYISIFYALRYHSVVTLPRAWR) lie on the Cytoplasmic side of the membrane. A helical transmembrane segment spans residues 164 to 183 (IIAAIWVASILTSLLFITYY). The Extracellular portion of the chain corresponds to 184-191 (NHTVVLLC). Residues 192 to 211 (LVGFFIAMLALMAVLYVHML) traverse the membrane as a helical segment. The Cytoplasmic segment spans residues 212–240 (ARACQHARGIARLQKRQRPIHQGFGLKGA). The chain crosses the membrane as a helical span at residues 241 to 266 (ATLTILLGVFFLCWGPFFLHLSLIVL). Topologically, residues 267-279 (CPQHPTCGCIFKN) are extracellular. The chain crosses the membrane as a helical span at residues 280–300 (FNLFLALIICNAIVDPLIYAF). Residues 301–317 (RSQELRKTLQEVLQCSW) lie on the Cytoplasmic side of the membrane. C315 is lipidated: S-palmitoyl cysteine.

It belongs to the G-protein coupled receptor 1 family. In terms of assembly, interacts with MGRN1, but does not undergo MGRN1-mediated ubiquitination; this interaction competes with GNAS-binding and thus inhibits agonist-induced cAMP production. Interacts with OPN3; the interaction results in a decrease in MC1R-mediated cAMP signaling and ultimately a decrease in melanin production in melanocytes.

The protein localises to the cell membrane. Functionally, receptor for MSH (alpha, beta and gamma) and ACTH. The activity of this receptor is mediated by G proteins which activate adenylate cyclase. Mediates melanogenesis, the production of eumelanin (black/brown) and phaeomelanin (red/yellow), via regulation of cAMP signaling in melanocytes. The sequence is that of Melanocyte-stimulating hormone receptor (MC1R) from Cervus elaphus (Red deer).